The sequence spans 363 residues: Transcription factor IIIA (363 aa).

9 consecutive C2H2-type zinc fingers follow at residues Phe38–His62, Phe68–His92, Phe98–His123, Tyr130–His154, Phe160–His184, Tyr187–His211, Val215–His237, Tyr244–His269, and Phe275–His299. The disordered stretch occupies residues Pro301–His363. Residues Ser338–Glu350 show a composition bias toward low complexity.

The protein resides in the nucleus. Its function is as follows. Involved in ribosomal large subunit biogenesis. Binds the approximately 50 base pairs internal control region (ICR) of 5S ribosomal RNA genes. It is required for their RNA polymerase III-dependent transcription and may also maintain the transcription of other genes. Also binds the transcribed 5S RNA's. The protein is Transcription factor IIIA (Gtf3a) of Rattus norvegicus (Rat).